The following is a 73-amino-acid chain: Putative membrane protein insertion efficiency factor (73 aa).

This sequence belongs to the UPF0161 family.

It is found in the cell inner membrane. In terms of biological role, could be involved in insertion of integral membrane proteins into the membrane. This chain is Putative membrane protein insertion efficiency factor, found in Neisseria gonorrhoeae (strain ATCC 700825 / FA 1090).